The primary structure comprises 367 residues: Polyenoic acids biosynthesis gene cluster protein Ba17b (367 aa).

Transmembrane regions (helical) follow at residues 16 to 36, 50 to 70, and 90 to 110; these read LEVF…LRFY, WLII…IGAV, and LVAF…TEGL. Asn-133 carries N-linked (GlcNAc...) asparagine glycosylation. The next 3 helical transmembrane spans lie at 137 to 157, 183 to 203, and 211 to 231; these read LVLV…CTPF, FPNI…VWGL, and LVLV…GGDS. Asn-245 carries N-linked (GlcNAc...) asparagine glycosylation. A helical transmembrane segment spans residues 259–279; sequence LIIWTVCEPGVYLIAACLLVY.

Belongs to the SAT4 family.

The protein localises to the membrane. It participates in secondary metabolite biosynthesis. Part of the gene cluster that mediates the biosynthesis of (2Z,4E,6E,10E)-9-hydroxydodeca-2,4,6,10-tetraenoic acid (BAA), (2E,4E,6E,10E)-9-hydroxydodeca-2,4,6,10-tetraenoic acid (BAB), and (2Z,4E,6E)-octa-2,4,6-trienedioic acid (PBA). The highly reducing polyketide synthase Ba17a is sufficent to produce PBA and BAA. The still to be characterized protein Ba17b leads to an increased production of BAA as well as to the production of the new compound BAB. BAA does not possess insecticidal activity against G.mellonella larvae, however, both BAA and BAB increase the growth of Candida albicans and BAA can mitigate the fungicidal effects of fluconazole over C.albicans, suggesting that generalist pathogens such as M.anisopliae, can potentially manipulate the yeast microbiota found in arthropods (and anywhere else) by the activity of compounds as BAA and BAB. This chain is Polyenoic acids biosynthesis gene cluster protein Ba17b, found in Metarhizium anisopliae (Entomophthora anisopliae).